We begin with the raw amino-acid sequence, 71 residues long: Small ribosomal subunit protein bS21 (71 aa).

Belongs to the bacterial ribosomal protein bS21 family.

This is Small ribosomal subunit protein bS21 from Nitrosococcus oceani (strain ATCC 19707 / BCRC 17464 / JCM 30415 / NCIMB 11848 / C-107).